Consider the following 426-residue polypeptide: uncharacterized protein (426 aa).

It to M.leprae L518_C2_147 and M.tuberculosis Rv1524.

This is an uncharacterized protein from Mycobacterium tuberculosis (strain CDC 1551 / Oshkosh).